We begin with the raw amino-acid sequence, 108 residues long: Nucleoid-associated protein Mmwyl1_2533 (108 aa).

The interval 1 to 22 (MFKGGMGNMMRQAQQMQENMQK) is disordered. Polar residues predominate over residues 11-22 (RQAQQMQENMQK).

Belongs to the YbaB/EbfC family. Homodimer.

The protein resides in the cytoplasm. The protein localises to the nucleoid. In terms of biological role, binds to DNA and alters its conformation. May be involved in regulation of gene expression, nucleoid organization and DNA protection. This Marinomonas sp. (strain MWYL1) protein is Nucleoid-associated protein Mmwyl1_2533.